Reading from the N-terminus, the 265-residue chain is Novel plant SNARE 12 (265 aa).

Residues 1–217 (MASELPMSPH…IGRQVATDKC (217 aa)) lie on the Cytoplasmic side of the membrane. Residues 32-106 (LDKIKDSSRQ…ALRKTYLNTL (75 aa)) are a coiled coil. Serine 74 is modified (phosphoserine). Positions 146–208 (MKRMDETDQA…KKASQLVKEI (63 aa)) constitute a t-SNARE coiled-coil homology domain. The chain crosses the membrane as a helical; Anchor for type IV membrane protein span at residues 218–238 (IMAFLFLIVCGVIAIIIVKIV). The Vesicular segment spans residues 239–265 (NPNNKDIRDIPGLAPPAQSRKLLYFRE).

This sequence belongs to the novel plant SNARE family. As to expression, expressed in roots, stems, flower, siliques and leaves.

Its subcellular location is the membrane. Functionally, vesicle trafficking protein that functions in the secretory pathway. The chain is Novel plant SNARE 12 (NPSN12) from Arabidopsis thaliana (Mouse-ear cress).